A 602-amino-acid chain; its full sequence is Elongation factor 4 (602 aa).

The tr-type G domain occupies 7–189 (RNIRNFSIIA…AIVQRIPAPQ (183 aa)). Residues 19-24 (DHGKST) and 136-139 (NKID) each bind GTP.

This sequence belongs to the TRAFAC class translation factor GTPase superfamily. Classic translation factor GTPase family. LepA subfamily.

The protein localises to the cell inner membrane. It catalyses the reaction GTP + H2O = GDP + phosphate + H(+). Its function is as follows. Required for accurate and efficient protein synthesis under certain stress conditions. May act as a fidelity factor of the translation reaction, by catalyzing a one-codon backward translocation of tRNAs on improperly translocated ribosomes. Back-translocation proceeds from a post-translocation (POST) complex to a pre-translocation (PRE) complex, thus giving elongation factor G a second chance to translocate the tRNAs correctly. Binds to ribosomes in a GTP-dependent manner. This is Elongation factor 4 from Xylella fastidiosa (strain 9a5c).